Consider the following 280-residue polypeptide: MKLVMVSGRSGSGKSVALRVLEDLGYYCVDNLPLPLMDTLLEQLKDSTELVAISVDVRNMHETELDKQLSNLPEGTELLSFFLNSSDEVLLKRYSETRRLHPLSRSKTSLKEAIDHERILLEPVSKLVDHYIDTSNLNIYDLSNQVREILLGSVDKELVINFESFGFKHGMPAEADFMFDVRFLPNPHWEPELRPMTGLDEPVQLFLSQQPTVNKFIWQIENLLETWLPHLERNNRSYLTIAIGCTGGQHRSVYVTEQLAKLFSQSKHTVQARHRELSND.

8–15 (GRSGSGKS) is a binding site for ATP. 56-59 (DVRN) is a GTP binding site.

The protein belongs to the RapZ-like family.

Functionally, displays ATPase and GTPase activities. The polypeptide is Nucleotide-binding protein Swoo_4243 (Shewanella woodyi (strain ATCC 51908 / MS32)).